Consider the following 172-residue polypeptide: Adenine phosphoribosyltransferase (172 aa).

This sequence belongs to the purine/pyrimidine phosphoribosyltransferase family. As to quaternary structure, homodimer.

It localises to the cytoplasm. The enzyme catalyses AMP + diphosphate = 5-phospho-alpha-D-ribose 1-diphosphate + adenine. It participates in purine metabolism; AMP biosynthesis via salvage pathway; AMP from adenine: step 1/1. Its function is as follows. Catalyzes a salvage reaction resulting in the formation of AMP, that is energically less costly than de novo synthesis. The chain is Adenine phosphoribosyltransferase from Hydrogenovibrio crunogenus (strain DSM 25203 / XCL-2) (Thiomicrospira crunogena).